A 421-amino-acid chain; its full sequence is CinA-like protein (421 aa).

Belongs to the CinA family.

The polypeptide is CinA-like protein (Mycobacterium sp. (strain MCS)).